We begin with the raw amino-acid sequence, 232 residues long: Ribose-5-phosphate isomerase A (232 aa).

Substrate is bound by residues 31-34 (TGST), 87-90 (DGAD), and 100-103 (KGGG). The active-site Proton acceptor is the Glu-109. Lys-127 contributes to the substrate binding site.

Belongs to the ribose 5-phosphate isomerase family. In terms of assembly, homodimer.

The enzyme catalyses aldehydo-D-ribose 5-phosphate = D-ribulose 5-phosphate. It participates in carbohydrate degradation; pentose phosphate pathway; D-ribose 5-phosphate from D-ribulose 5-phosphate (non-oxidative stage): step 1/1. In terms of biological role, catalyzes the reversible conversion of ribose-5-phosphate to ribulose 5-phosphate. This is Ribose-5-phosphate isomerase A from Bifidobacterium longum subsp. infantis (strain ATCC 15697 / DSM 20088 / JCM 1222 / NCTC 11817 / S12).